We begin with the raw amino-acid sequence, 558 residues long: Trehalase 1 (558 aa).

This sequence belongs to the glycosyl hydrolase 15 family.

It catalyses the reaction alpha,alpha-trehalose + H2O = alpha-D-glucose + beta-D-glucose. Its pathway is glycan degradation; trehalose degradation; D-glucose from alpha,alpha-trehalose: step 1/1. Its function is as follows. Catalyzes the hydrolysis of alpha,alpha-trehalose into two molecules of D-glucose. This is Trehalase 1 (treH1) from Sulfolobus acidocaldarius (strain ATCC 33909 / DSM 639 / JCM 8929 / NBRC 15157 / NCIMB 11770).